Here is a 126-residue protein sequence, read N- to C-terminus: MMTPTIPVALFDRLLVEGISPHELVRRKLMCLFNSCAVPGGETLPPLLTRGMPEWHEVNVGDKRVLNWFCRELRAAILRYEPSINMLKVSVKDAHHQTLALSLEAMLQDESEPLRLEIAYSNGRWR.

The protein belongs to the GpW/Gp25 family. IraD subfamily. In terms of assembly, interacts with RssB.

The protein resides in the cytoplasm. Inhibits RpoS proteolysis by regulating RssB activity, thereby increasing the stability of the sigma stress factor RpoS during oxidative stress. Its effect on RpoS stability is due to its interaction with RssB, which probably blocks the interaction of RssB with RpoS, and the consequent delivery of the RssB-RpoS complex to the ClpXP protein degradation pathway. In Salmonella enteritidis PT4 (strain P125109), this protein is Anti-adapter protein IraD.